A 128-amino-acid polypeptide reads, in one-letter code: Gene 39 protein (128 aa).

This Mycobacterium (Mycobacteriophage D29) protein is Gene 39 protein (39).